We begin with the raw amino-acid sequence, 309 residues long: Foldase protein PrsA 2 (309 aa).

Residues 1 to 22 (MKQMNKLITGVVTLATVVTLSA) form the signal peptide. A lipid anchor (N-palmitoyl cysteine) is attached at C23. Residue C23 is the site of S-diacylglycerol cysteine attachment. A PpiC domain is found at 146-241 (TPTMTAEIMQ…RTYHIIKVTK (96 aa)).

The protein belongs to the PrsA family.

The protein localises to the cell membrane. The catalysed reaction is [protein]-peptidylproline (omega=180) = [protein]-peptidylproline (omega=0). In terms of biological role, plays a major role in protein secretion by helping the post-translocational extracellular folding of several secreted proteins. This is Foldase protein PrsA 2 (prsA2) from Streptococcus pyogenes serotype M3 (strain ATCC BAA-595 / MGAS315).